The sequence spans 419 residues: Serine--tRNA ligase (419 aa).

Positions 45-66 are disordered; the sequence is ADSLRAEQKAASKSVGGASPEE. L-serine is bound at residue 226–228; sequence TSE. ATP-binding positions include 257 to 259 and Val273; that span reads RRE. Residue Glu280 participates in L-serine binding. 344 to 347 is an ATP binding site; that stretch reads ELTS. Residue Thr379 coordinates L-serine.

This sequence belongs to the class-II aminoacyl-tRNA synthetase family. Type-1 seryl-tRNA synthetase subfamily. As to quaternary structure, homodimer. The tRNA molecule binds across the dimer.

Its subcellular location is the cytoplasm. The enzyme catalyses tRNA(Ser) + L-serine + ATP = L-seryl-tRNA(Ser) + AMP + diphosphate + H(+). It carries out the reaction tRNA(Sec) + L-serine + ATP = L-seryl-tRNA(Sec) + AMP + diphosphate + H(+). Its pathway is aminoacyl-tRNA biosynthesis; selenocysteinyl-tRNA(Sec) biosynthesis; L-seryl-tRNA(Sec) from L-serine and tRNA(Sec): step 1/1. Functionally, catalyzes the attachment of serine to tRNA(Ser). Is also able to aminoacylate tRNA(Sec) with serine, to form the misacylated tRNA L-seryl-tRNA(Sec), which will be further converted into selenocysteinyl-tRNA(Sec). The sequence is that of Serine--tRNA ligase from Mycobacterium ulcerans (strain Agy99).